The chain runs to 264 residues: 3-methyl-2-oxobutanoate hydroxymethyltransferase (264 aa).

The Mg(2+) site is built by Asp45 and Asp84. 3-methyl-2-oxobutanoate contacts are provided by residues 45–46 (DS), Asp84, and Lys112. Glu114 provides a ligand contact to Mg(2+). The Proton acceptor role is filled by Glu181.

The protein belongs to the PanB family. In terms of assembly, homodecamer; pentamer of dimers. Mg(2+) serves as cofactor.

Its subcellular location is the cytoplasm. It catalyses the reaction 3-methyl-2-oxobutanoate + (6R)-5,10-methylene-5,6,7,8-tetrahydrofolate + H2O = 2-dehydropantoate + (6S)-5,6,7,8-tetrahydrofolate. It participates in cofactor biosynthesis; (R)-pantothenate biosynthesis; (R)-pantoate from 3-methyl-2-oxobutanoate: step 1/2. Its function is as follows. Catalyzes the reversible reaction in which hydroxymethyl group from 5,10-methylenetetrahydrofolate is transferred onto alpha-ketoisovalerate to form ketopantoate. This is 3-methyl-2-oxobutanoate hydroxymethyltransferase from Escherichia coli O8 (strain IAI1).